Consider the following 360-residue polypeptide: Peptide chain release factor 1 (360 aa).

Gln235 is modified (N5-methylglutamine).

Belongs to the prokaryotic/mitochondrial release factor family. In terms of processing, methylated by PrmC. Methylation increases the termination efficiency of RF1.

The protein localises to the cytoplasm. Its function is as follows. Peptide chain release factor 1 directs the termination of translation in response to the peptide chain termination codons UAG and UAA. This chain is Peptide chain release factor 1, found in Burkholderia cenocepacia (strain HI2424).